The primary structure comprises 294 residues: N-acetylmuramic acid 6-phosphate etherase (294 aa).

The SIS domain maps to 54-217 (VIKSFEEEGR…STASMIGVGK (164 aa)). Catalysis depends on E82, which acts as the Proton donor. Residue E113 is part of the active site.

It belongs to the GCKR-like family. MurNAc-6-P etherase subfamily. In terms of assembly, homodimer.

It catalyses the reaction N-acetyl-D-muramate 6-phosphate + H2O = N-acetyl-D-glucosamine 6-phosphate + (R)-lactate. Its pathway is amino-sugar metabolism; N-acetylmuramate degradation. Its function is as follows. Specifically catalyzes the cleavage of the D-lactyl ether substituent of MurNAc 6-phosphate, producing GlcNAc 6-phosphate and D-lactate. The polypeptide is N-acetylmuramic acid 6-phosphate etherase (Bacillus cereus (strain G9842)).